The primary structure comprises 500 residues: 7-alpha-hydroxycholest-4-en-3-one 12-alpha-hydroxylase (500 aa).

A helical membrane pass occupies residues 2–21; that stretch reads VLWGLLGALLMVMVGWLCLP. Ser325 carries the post-translational modification Phosphoserine. Heme is bound at residue Cys439.

Belongs to the cytochrome P450 family. Requires heme as cofactor. In terms of tissue distribution, liver (at protein level).

It localises to the endoplasmic reticulum membrane. The protein resides in the microsome membrane. The catalysed reaction is 7alpha-hydroxycholest-4-en-3-one + reduced [NADPH--hemoprotein reductase] + O2 = 7alpha,12alpha-dihydroxycholest-4-en-3-one + oxidized [NADPH--hemoprotein reductase] + H2O + H(+). It catalyses the reaction 5beta-cholestane-3alpha,7alpha-diol + reduced [NADPH--hemoprotein reductase] + O2 = 5beta-cholestane-3alpha,7alpha,12alpha-triol + oxidized [NADPH--hemoprotein reductase] + H2O + H(+). The enzyme catalyses chenodeoxycholate + reduced [NADPH--hemoprotein reductase] + O2 = cholate + oxidized [NADPH--hemoprotein reductase] + H2O + H(+). The protein operates within lipid metabolism; bile acid biosynthesis. With respect to regulation, up-regulated upon treatment with streptozotocin. Functionally, a cytochrome P450 monooxygenase involved in primary bile acid biosynthesis. Catalyzes the 12alpha-hydroxylation of 7alpha-hydroxy-4-cholesten-3-one, an intermediate metabolite in cholic acid biosynthesis. Controls biliary balance of cholic acid and chenodeoxycholic acid, ultimately regulating the intestinal absorption of dietary lipids. Mechanistically, uses molecular oxygen inserting one oxygen atom into a substrate, and reducing the second into a water molecule, with two electrons provided by NADPH via cytochrome P450 reductase (CPR; NADPH--hemoprotein reductase). In Oryctolagus cuniculus (Rabbit), this protein is 7-alpha-hydroxycholest-4-en-3-one 12-alpha-hydroxylase (CYP8B1).